Reading from the N-terminus, the 238-residue chain is DNA repair protein RecO (238 aa).

Belongs to the RecO family.

In terms of biological role, involved in DNA repair and RecF pathway recombination. The polypeptide is DNA repair protein RecO (Hahella chejuensis (strain KCTC 2396)).